Here is a 321-residue protein sequence, read N- to C-terminus: XylDLEGF operon transcriptional activator 1 (321 aa).

An HTH araC/xylS-type domain is found at 214 to 315; it reads ERVVQFIEEN…GELPSDTLRQ (102 aa). DNA-binding regions (H-T-H motif) lie at residues 231-252 and 282-305; these read ERLAELAMMSPRSLYNLFEKHA and ITEIALDYGFLHLGRFAENYRSAF.

It is found in the cytoplasm. Its function is as follows. Regulatory protein of the TOL plasmid xyl operons. XylS activates the xylXYZLTEGFJQKIH operon required for the degradation of toluene, m-xylene and p-xylene. The chain is XylDLEGF operon transcriptional activator 1 (xylS1) from Pseudomonas putida (Arthrobacter siderocapsulatus).